A 110-amino-acid chain; its full sequence is UPF0122 protein SP70585_1353 (110 aa).

The protein belongs to the UPF0122 family.

Might take part in the signal recognition particle (SRP) pathway. This is inferred from the conservation of its genetic proximity to ftsY/ffh. May be a regulatory protein. This chain is UPF0122 protein SP70585_1353, found in Streptococcus pneumoniae (strain 70585).